We begin with the raw amino-acid sequence, 419 residues long: CCA-adding enzyme (419 aa).

ATP contacts are provided by S54 and R57. Residues S54 and R57 each coordinate CTP. 3 residues coordinate Mg(2+): D66, D68, and D118. Positions 141, 161, and 170 each coordinate ATP. Positions 141, 161, and 170 each coordinate CTP.

This sequence belongs to the tRNA nucleotidyltransferase/poly(A) polymerase family. Archaeal CCA-adding enzyme subfamily. As to quaternary structure, homodimer. Requires Mg(2+) as cofactor.

The enzyme catalyses a tRNA precursor + 2 CTP + ATP = a tRNA with a 3' CCA end + 3 diphosphate. It carries out the reaction a tRNA with a 3' CCA end + 2 CTP + ATP = a tRNA with a 3' CCACCA end + 3 diphosphate. Functionally, catalyzes the addition and repair of the essential 3'-terminal CCA sequence in tRNAs without using a nucleic acid template. Adds these three nucleotides in the order of C, C, and A to the tRNA nucleotide-73, using CTP and ATP as substrates and producing inorganic pyrophosphate. tRNA 3'-terminal CCA addition is required both for tRNA processing and repair. Also involved in tRNA surveillance by mediating tandem CCA addition to generate a CCACCA at the 3' terminus of unstable tRNAs. While stable tRNAs receive only 3'-terminal CCA, unstable tRNAs are marked with CCACCA and rapidly degraded. This Pyrobaculum aerophilum (strain ATCC 51768 / DSM 7523 / JCM 9630 / CIP 104966 / NBRC 100827 / IM2) protein is CCA-adding enzyme.